Reading from the N-terminus, the 88-residue chain is Apolipoprotein C-I (88 aa).

An N-terminal signal peptide occupies residues 1–26 (MRLILSLPVLVVVLSMVLEGPAPAQA).

It belongs to the apolipoprotein C1 family. As to expression, expressed in the liver.

It is found in the secreted. In terms of biological role, inhibitor of lipoprotein binding to the low density lipoprotein (LDL) receptor, LDL receptor-related protein, and very low density lipoprotein (VLDL) receptor. Associates with high density lipoproteins (HDL) and the triacylglycerol-rich lipoproteins in the plasma and makes up about 10% of the protein of the VLDL and 2% of that of HDL. Appears to interfere directly with fatty acid uptake and is also the major plasma inhibitor of cholesteryl ester transfer protein (CETP). Binds free fatty acids and reduces their intracellular esterification. Modulates the interaction of APOE with beta-migrating VLDL and inhibits binding of beta-VLDL to the LDL receptor-related protein. This is Apolipoprotein C-I (APOC1) from Canis lupus familiaris (Dog).